The sequence spans 395 residues: MAVEFKKIEGDSIQYFALVIILAAVTALGFYAYVLDHKMGLNGLSNRVPWGIVNAGIPYFIGLSAGSLIVSALAGVFNIKKYKVFSRIAAYMAAAWIIAAILSIALDIGKLYHFMNAVRYFNPTSIFSWNAFLYSSYFVICSIYLLVQFEEMEKATRFMAGLAVFWAVLVHSGTGAIYSFVYSKELYHSALTPPMFIVCAITSGLGLLLANLYFTFRFTKRELDPKLIRGLALIFAGLMMVLGYFLAVEGLEKGYIPALHEAVQFVFLTPTSGVFWSFWLLVIFGIAIPIIIVLNPKTGYDLRWITFAGILHAALVFAERFYLIIPGQVFPEEYLPGYELESLHTLEGYIVSYTPSVFEWLQVIGLIAMVYLIFVVGVKLFALIPERAVEEVVEE.

10 helical membrane passes run 15–35 (YFAL…AYVL), 57–77 (IPYF…AGVF), 88–108 (IAAY…ALDI), 126–146 (IFSW…IYLL), 158–178 (FMAG…GAIY), 196–216 (FIVC…YFTF), 231–251 (LALI…VEGL), 274–294 (VFWS…IIVL), 305–325 (ITFA…YLII), and 364–384 (IGLI…FALI).

This sequence belongs to the NrfD family. Consists of five subunits: an integral membrane subunit, a cytochrome b-like subunit, a cytochrome c subunit and two iron-sulfur subunits.

It is found in the cell membrane. Its function is as follows. Has menaquinol-oxidizing activity. HmeB subunit may function as a menaquinol-oxidizing site. HmeA, HmeB and HmeE subunits may together catalyze electron transfer from menaquinol to cytochrome c. This is Hdr-like menaquinol oxidoreductase integral membrane subunit (hmeB) from Archaeoglobus fulgidus (strain ATCC 49558 / DSM 4304 / JCM 9628 / NBRC 100126 / VC-16).